The chain runs to 562 residues: Abrin-c (562 aa).

Positions 1-34 (MDKTLKLLILCLAWTCSFSALRCAARTYPPVATN) are cleaved as a signal peptide. Glutamine 35 is modified (pyrrolidone carboxylic acid). Glutamate 198 is an active-site residue. A glycan (N-linked (GlcNAc...) asparagine) is linked at asparagine 234. 3 disulfide bridges follow: cysteine 281–cysteine 303, cysteine 320–cysteine 339, and cysteine 363–cysteine 380. The region spanning 307–434 (YEPTVRIGGR…YLMRQGWRTG (128 aa)) is the Ricin B-type lectin 1 domain. Residues 317-359 (DGMCVDVYDDGYHNGNRIIAWKCKDRLEENQLWTLKSDKTIRS) form a 1-alpha repeat. Residues 360-400 (NGKCLTTEGYAPGNYVMIYDCTSAVAEATYWEIWDNGTIIN) form a 1-beta repeat. N-linked (GlcNAc...) asparagine glycans are attached at residues asparagine 395 and asparagine 435. The stretch at 403-435 (SALVLSAESSSMGGTLTVQTNEYLMRQGWRTGN) is one 1-gamma repeat. The Ricin B-type lectin 2 domain maps to 437-561 (TSPFVTSISG…GKPNQIWLTL (125 aa)). The 2-alpha repeat unit spans residues 448–483 (SDLCMQAQGSNVWLADCDNNKKEQQWALYTDGSIRS). Disulfide bonds link cysteine 451–cysteine 464 and cysteine 490–cysteine 507. The stretch at 487 to 526 (TNNCLTSKDHKQGSPIVLMACSNGWASQRWLFKNDGSIYN) is one 2-beta repeat. One copy of the 2-gamma repeat lies at 529–562 (DDMVMDVKRSDPSLKEIILHPYHGKPNQIWLTLF).

This sequence in the N-terminal section; belongs to the ribosome-inactivating protein family. Type 2 RIP subfamily. Disulfide-linked dimer of A and B chains.

It carries out the reaction Endohydrolysis of the N-glycosidic bond at one specific adenosine on the 28S rRNA.. The A chain is responsible for inhibiting protein synthesis through the catalytic inactivation of 60S ribosomal subunits by removing adenine from position 4,324 of 28S rRNA. Abrin-a is more toxic than ricin. Functionally, the B chain is a galactose-specific lectin that facilitates the binding of abrin to the cell membrane that precedes endocytosis. The chain is Abrin-c from Abrus precatorius (Indian licorice).